Reading from the N-terminus, the 250-residue chain is 3-deoxy-manno-octulosonate cytidylyltransferase (250 aa).

The protein belongs to the KdsB family.

It localises to the cytoplasm. It catalyses the reaction 3-deoxy-alpha-D-manno-oct-2-ulosonate + CTP = CMP-3-deoxy-beta-D-manno-octulosonate + diphosphate. The protein operates within nucleotide-sugar biosynthesis; CMP-3-deoxy-D-manno-octulosonate biosynthesis; CMP-3-deoxy-D-manno-octulosonate from 3-deoxy-D-manno-octulosonate and CTP: step 1/1. It participates in bacterial outer membrane biogenesis; lipopolysaccharide biosynthesis. Its function is as follows. Activates KDO (a required 8-carbon sugar) for incorporation into bacterial lipopolysaccharide in Gram-negative bacteria. In Azorhizobium caulinodans (strain ATCC 43989 / DSM 5975 / JCM 20966 / LMG 6465 / NBRC 14845 / NCIMB 13405 / ORS 571), this protein is 3-deoxy-manno-octulosonate cytidylyltransferase.